We begin with the raw amino-acid sequence, 131 residues long: Ribosomally synthesized cyclic peptide phomopsin precursor gigA (131 aa).

The N-terminal stretch at M1–A18 is a signal peptide. 5 consecutive propeptides follow at residues A19–R38, A48–R65, A75–R92, A102–R119, and A129–M131.

GigA is processed by several endopeptidases including kexin proteases to produce 2 identical copies of the nonaxapeptide Ile-Asn-Phe-Lys-Ile-Pro-Tyr-Thr-Gly, one copy of the nonaketide Ile-Gly-Phe-Lys-Leu-Pro-Tyr-Arg-Gly and one copy of the nonaketide Pro-Asn-Phe-Lys-Met-Pro-Tyr-Arg-Gly, that are further modified into phomapsins B, C and A, respectively. After being excised from the precursor peptide, the core peptides are cyclized and modified post-translationally by enzymes encoded within the gene cluster. Epichloecyclin biosynthesis requires only dimethylation of the side-chain amino group of the conserved lysine for completion.

Its pathway is mycotoxin biosynthesis. Ribosomally synthesized cyclic peptide phomopsin precursor; part of the gene cluster that mediates the biosynthesis of the epichloecyclins, a group of nonapeptides, with a likely cyclic structure and dimethylation of the conserved lysine. The gigA translated product contains 4 repeated peptide embedding the nonapeptide Ile-Asn-Phe-Lys-Ile-Pro-Tyr-Thr-Gly in repeats 1 and 2, Ile-Gly-Phe-Lys-Leu-Pro-Tyr-Arg-Gly in repeat 3, and Pro-Asn-Phe-Lys-Met-Pro-Tyr-Arg-Gly in repeat 4 that are converted into epichloecyclins B, C and A, respectively. Moreover, removal of the last Gly residue in epichloecyclins B and C leads to epichloecyclins D and E, respectively. The polypeptide is Ribosomally synthesized cyclic peptide phomopsin precursor gigA (nc25) (Epichloe festucae (strain Fl1)).